A 184-amino-acid polypeptide reads, in one-letter code: Succinate dehydrogenase cytochrome b560 subunit, mitochondrial (184 aa).

The chain crosses the membrane as a helical span at residues leucine 65–leucine 94. Residues proline 95 to valine 114 lie on the Mitochondrial intermembrane side of the membrane. Residues threonine 115–phenylalanine 139 form a helical membrane-spanning segment. Position 129 (histidine 129) interacts with heme. At aspartate 140 to asparagine 147 the chain is on the mitochondrial matrix side. A helical transmembrane segment spans residues isoleucine 148 to isoleucine 169. At valine 170–asparagine 172 the chain is on the mitochondrial intermembrane side.

The protein belongs to the cytochrome b560 family. Component of complex II composed of four subunits: a flavoprotein (FP), iron-sulfur protein (IP), and a cytochrome b560 composed of two transmembrane proteins. Requires heme as cofactor.

It is found in the mitochondrion inner membrane. The protein operates within carbohydrate metabolism; tricarboxylic acid cycle. Functionally, membrane-anchoring subunit of succinate dehydrogenase (SDH) that is involved in complex II of the mitochondrial electron transport chain and is responsible for transferring electrons from succinate to ubiquinone (coenzyme Q). Mediates resistance to enteropathogenic E.coli infection. The polypeptide is Succinate dehydrogenase cytochrome b560 subunit, mitochondrial (mev-1) (Caenorhabditis briggsae).